The sequence spans 367 residues: Aminomethyltransferase (367 aa).

This sequence belongs to the GcvT family. The glycine cleavage system is composed of four proteins: P, T, L and H.

It catalyses the reaction N(6)-[(R)-S(8)-aminomethyldihydrolipoyl]-L-lysyl-[protein] + (6S)-5,6,7,8-tetrahydrofolate = N(6)-[(R)-dihydrolipoyl]-L-lysyl-[protein] + (6R)-5,10-methylene-5,6,7,8-tetrahydrofolate + NH4(+). The glycine cleavage system catalyzes the degradation of glycine. This Mycolicibacterium paratuberculosis (strain ATCC BAA-968 / K-10) (Mycobacterium paratuberculosis) protein is Aminomethyltransferase.